We begin with the raw amino-acid sequence, 400 residues long: S-adenosylmethionine sensor upstream of mTORC1 (400 aa).

6 residues coordinate S-adenosyl-L-methionine: Arg99, Gly168, Asp186, Asp198, Phe199, and Ser240.

This sequence belongs to the BMT2/SAMTOR family. As to quaternary structure, interacts with the GATOR1 complex; interaction is disrupted when samtor binds S-adenosyl-L-methionine. Interacts with the KICSTOR complex; interaction is disrupted when samtor binds S-adenosyl-L-methionine.

S-adenosyl-L-methionine-binding protein that acts as an inhibitor of mTORC1 signaling via interaction with the GATOR1 and KICSTOR complexes. Acts as a sensor of S-adenosyl-L-methionine to signal methionine sufficiency to mTORC1: in presence of methionine, binds S-adenosyl-L-methionine, leading to disrupt interaction with the GATOR1 and KICSTOR complexes and promote mTORC1 signaling. Upon methionine starvation, S-adenosyl-L-methionine levels are reduced, thereby promoting the association with GATOR1 and KICSTOR, leading to inhibit mTORC1 signaling. Probably also acts as a S-adenosyl-L-methionine-dependent methyltransferase. This Xenopus laevis (African clawed frog) protein is S-adenosylmethionine sensor upstream of mTORC1.